An 84-amino-acid chain; its full sequence is SPbeta prophage-derived uncharacterized protein YomY (84 aa).

In Bacillus subtilis (strain 168), this protein is SPbeta prophage-derived uncharacterized protein YomY (yomY).